Consider the following 240-residue polypeptide: Fimbriae Y protein (240 aa).

The protein resides in the fimbrium. In Salmonella typhimurium (strain LT2 / SGSC1412 / ATCC 700720), this protein is Fimbriae Y protein (fimY).